Here is a 394-residue protein sequence, read N- to C-terminus: RHOMBOID-like protein 4 (394 aa).

The segment at 1 to 51 is disordered; that stretch reads MGEKDSETAPIWGKTRERERSNNNNIQPMDLESSSSVSGQQRSLTQSRSSY. Residues 39–49 are compositionally biased toward polar residues; that stretch reads GQQRSLTQSRS. Helical transmembrane passes span 64-84, 147-167, 175-195, 201-221, 231-251, 254-274, and 300-320; these read WFPWLIPCFVVANVAVFVITM, WLHGGVVHLLMNMLTLLFIGI, FIRIGLLYLISGFGGSILSAL, ISVGASGAVFGLLGGMLSEIF, VVTIVTLVLIVAVNLGLGVLP, DNFAHIGGFATGFLLGFVLLI, and ILWTISLLILVAGFIVGLISL. The active-site Nucleophile is Ser206. The active-site Charge relay system is the His258.

The protein belongs to the peptidase S54 family.

Its subcellular location is the membrane. The enzyme catalyses Cleaves type-1 transmembrane domains using a catalytic dyad composed of serine and histidine that are contributed by different transmembrane domains.. In terms of biological role, probable rhomboid-type serine protease that catalyzes intramembrane proteolysis. This Arabidopsis thaliana (Mouse-ear cress) protein is RHOMBOID-like protein 4.